We begin with the raw amino-acid sequence, 124 residues long: Small ribosomal subunit protein uS13 (124 aa).

The disordered stretch occupies residues 95-124 (GLPVRGQRTKTNARTRKGPKRTIAGKKKAR).

The protein belongs to the universal ribosomal protein uS13 family. Part of the 30S ribosomal subunit. Forms a loose heterodimer with protein S19. Forms two bridges to the 50S subunit in the 70S ribosome.

In terms of biological role, located at the top of the head of the 30S subunit, it contacts several helices of the 16S rRNA. In the 70S ribosome it contacts the 23S rRNA (bridge B1a) and protein L5 of the 50S subunit (bridge B1b), connecting the 2 subunits; these bridges are implicated in subunit movement. Contacts the tRNAs in the A and P-sites. This chain is Small ribosomal subunit protein uS13, found in Mycobacterium sp. (strain JLS).